The primary structure comprises 1302 residues: Vascular endothelial growth factor receptor kdr-like (1302 aa).

The signal sequence occupies residues 1–28 (MTPLKTSVKAFFTLHVLFSCISHGLVEG). Residues 29-740 (SRLPDPQLLP…GEDGKPNIEV (712 aa)) are Extracellular-facing. Ig-like C2-type domains are found at residues 34 to 115 (PQLL…HEVS), 143 to 206 (DPYF…VDNA), 222 to 318 (KNLA…TKVI), 326 to 412 (NVTH…ISYK), 419 to 542 (PKIF…FYVD), 545 to 636 (PQPF…SALT), and 643 to 728 (PWLM…AVIT). 2 disulfides stabilise this stretch: Cys55–Cys104 and Cys150–Cys199. Asn69 and Asn97 each carry an N-linked (GlcNAc...) asparagine glycan. N-linked (GlcNAc...) asparagine glycosylation is found at Asn242, Asn265, Asn291, Asn326, Asn370, Asn380, Asn408, Asn453, Asn466, Asn505, Asn517, Asn532, Asn607, Asn611, Asn630, Asn648, and Asn655. Residues Cys243 and Cys302 are joined by a disulfide bond. A disulfide bridge links Cys444 with Cys524. An intrachain disulfide couples Cys565 to Cys618. Cys664 and Cys712 are disulfide-bonded. A helical transmembrane segment spans residues 741–761 (IILVSTGAAATFLWIMLILFI). Residues 762–1302 (RKLRKPSSAD…YVVRYSTPPV (541 aa)) are Cytoplasmic-facing. Residues 809 to 1139 (LRLGKTLGHG…ELVERLGDLL (331 aa)) enclose the Protein kinase domain. ATP is bound by residues 815 to 823 (LGHGAFGKV) and Lys843. Asp1003 functions as the Proton acceptor in the catalytic mechanism. Tyr1029, Tyr1034, and Tyr1150 each carry phosphotyrosine; by autocatalysis. Disordered stretches follow at residues 1159–1179 (TKADPSNQSPTEETSTRPVSL) and 1266–1292 (PLVPSLSLEDSSLDSEMECHSPPPDYN). Positions 1162-1176 (DPSNQSPTEETSTRP) are enriched in polar residues.

The protein belongs to the protein kinase superfamily. Tyr protein kinase family. CSF-1/PDGF receptor subfamily. In terms of assembly, interacts with isoform VEGF165 of vegfaa and isoform VEGF171 of vegfab. Post-translationally, phosphorylated and activated by vegfaa and vegfab. First expressed in embryos between 5- and 7-somites. At 7 somites, expressed in discrete bilateral stripes both anteriorly and posteriorly, and in a transverse ectodermal stripe in the hindbrain. From 7-somites, expression seems to extend caudally from the head, and in both directions in the trunk region, until by 20-somites, expression is detected as a continuous band from the anterior head region to the tailbud. Concurrently, cells expressing kdrl in the mid- and posterior trunk regions converge medially. By 24 hours post-fertilization (hpf), expressed in all the endothelial cells lining the vasculature.

It is found in the cell membrane. It carries out the reaction L-tyrosyl-[protein] + ATP = O-phospho-L-tyrosyl-[protein] + ADP + H(+). Its function is as follows. Receptor for VEGF or VEGFC. Has a tyrosine-protein kinase activity. Combinations of multiple VEGF receptors are required for development of different blood vessel types in the embryo. Involved in angiogenesis, specifically in VEGF-induced sprouting of new blood vessels. Particularly involved in artery formation. Does not appear to be required for hematopoiesis. This Danio rerio (Zebrafish) protein is Vascular endothelial growth factor receptor kdr-like (kdrl).